Here is a 377-residue protein sequence, read N- to C-terminus: Succinyl-diaminopimelate desuccinylase (377 aa).

His67 provides a ligand contact to Zn(2+). Residue Asp69 is part of the active site. Asp100 contacts Zn(2+). Glu134 functions as the Proton acceptor in the catalytic mechanism. Residues Glu135, Glu163, and His349 each coordinate Zn(2+).

It belongs to the peptidase M20A family. DapE subfamily. In terms of assembly, homodimer. It depends on Zn(2+) as a cofactor. Co(2+) is required as a cofactor.

It carries out the reaction N-succinyl-(2S,6S)-2,6-diaminopimelate + H2O = (2S,6S)-2,6-diaminopimelate + succinate. The protein operates within amino-acid biosynthesis; L-lysine biosynthesis via DAP pathway; LL-2,6-diaminopimelate from (S)-tetrahydrodipicolinate (succinylase route): step 3/3. Functionally, catalyzes the hydrolysis of N-succinyl-L,L-diaminopimelic acid (SDAP), forming succinate and LL-2,6-diaminopimelate (DAP), an intermediate involved in the bacterial biosynthesis of lysine and meso-diaminopimelic acid, an essential component of bacterial cell walls. The sequence is that of Succinyl-diaminopimelate desuccinylase from Haemophilus influenzae (strain 86-028NP).